The following is a 150-amino-acid chain: C-type lectin 37Db (150 aa).

Residues 1–20 (MMVKLLLLFLVCWSALPLES) form the signal peptide. A C-type lectin domain is found at 31 to 148 (IGEKQYYISL…CYSSVAFICQ (118 aa)). 2 cysteine pairs are disulfide-bonded: Cys52-Cys147 and Cys122-Cys139. 2 N-linked (GlcNAc...) asparagine glycosylation sites follow: Asn107 and Asn115.

It is found in the secreted. Functionally, galactose-specific lectin that displays calcium-dependent activity. Binds to the surface of hemocytes and enhances hemocyte encapsulation and melanization. This is likely by interacting with carbohydrates on the surface of the hemocytes. Also displays agglutination activity against the Gram-negative bacterium E.coli. The protein is C-type lectin 37Db of Drosophila melanogaster (Fruit fly).